Consider the following 152-residue polypeptide: Ribosome maturation factor RimP (152 aa).

Belongs to the RimP family.

The protein localises to the cytoplasm. In terms of biological role, required for maturation of 30S ribosomal subunits. The chain is Ribosome maturation factor RimP from Ruminiclostridium cellulolyticum (strain ATCC 35319 / DSM 5812 / JCM 6584 / H10) (Clostridium cellulolyticum).